A 367-amino-acid polypeptide reads, in one-letter code: NADH-quinone oxidoreductase subunit D (367 aa).

It belongs to the complex I 49 kDa subunit family. In terms of assembly, NDH-1 is composed of 14 different subunits. Subunits NuoB, C, D, E, F, and G constitute the peripheral sector of the complex.

Its subcellular location is the cell membrane. The catalysed reaction is a quinone + NADH + 5 H(+)(in) = a quinol + NAD(+) + 4 H(+)(out). In terms of biological role, NDH-1 shuttles electrons from NADH, via FMN and iron-sulfur (Fe-S) centers, to quinones in the respiratory chain. The immediate electron acceptor for the enzyme in this species is believed to be a menaquinone. Couples the redox reaction to proton translocation (for every two electrons transferred, four hydrogen ions are translocated across the cytoplasmic membrane), and thus conserves the redox energy in a proton gradient. The chain is NADH-quinone oxidoreductase subunit D from Geobacillus kaustophilus (strain HTA426).